The primary structure comprises 302 residues: Bifunctional protein FolD (302 aa).

NADP(+)-binding positions include 165-167 (GRS), Ser190, and Ile231.

Belongs to the tetrahydrofolate dehydrogenase/cyclohydrolase family. In terms of assembly, homodimer.

The catalysed reaction is (6R)-5,10-methylene-5,6,7,8-tetrahydrofolate + NADP(+) = (6R)-5,10-methenyltetrahydrofolate + NADPH. The enzyme catalyses (6R)-5,10-methenyltetrahydrofolate + H2O = (6R)-10-formyltetrahydrofolate + H(+). Its pathway is one-carbon metabolism; tetrahydrofolate interconversion. In terms of biological role, catalyzes the oxidation of 5,10-methylenetetrahydrofolate to 5,10-methenyltetrahydrofolate and then the hydrolysis of 5,10-methenyltetrahydrofolate to 10-formyltetrahydrofolate. This is Bifunctional protein FolD from Prochlorococcus marinus (strain MIT 9211).